Reading from the N-terminus, the 860-residue chain is Leucine--tRNA ligase (860 aa).

A 'HIGH' region motif is present at residues 42-52; sequence PYPSGRLHMGH. The short motif at 619-623 is the 'KMSKS' region element; that stretch reads KMSKS. Lys622 lines the ATP pocket.

This sequence belongs to the class-I aminoacyl-tRNA synthetase family.

It is found in the cytoplasm. It carries out the reaction tRNA(Leu) + L-leucine + ATP = L-leucyl-tRNA(Leu) + AMP + diphosphate. The chain is Leucine--tRNA ligase from Yersinia pseudotuberculosis serotype I (strain IP32953).